We begin with the raw amino-acid sequence, 421 residues long: UDP-N-acetylglucosamine 1-carboxyvinyltransferase (421 aa).

22-23 (KN) lines the phosphoenolpyruvate pocket. Position 92 (arginine 92) interacts with UDP-N-acetyl-alpha-D-glucosamine. Cysteine 116 functions as the Proton donor in the catalytic mechanism. Position 116 is a 2-(S-cysteinyl)pyruvic acid O-phosphothioketal (cysteine 116). Residues 121-125 (RPVDQ), aspartate 304, and isoleucine 326 contribute to the UDP-N-acetyl-alpha-D-glucosamine site.

The protein belongs to the EPSP synthase family. MurA subfamily.

The protein localises to the cytoplasm. It catalyses the reaction phosphoenolpyruvate + UDP-N-acetyl-alpha-D-glucosamine = UDP-N-acetyl-3-O-(1-carboxyvinyl)-alpha-D-glucosamine + phosphate. It participates in cell wall biogenesis; peptidoglycan biosynthesis. Functionally, cell wall formation. Adds enolpyruvyl to UDP-N-acetylglucosamine. The polypeptide is UDP-N-acetylglucosamine 1-carboxyvinyltransferase (Bordetella avium (strain 197N)).